The primary structure comprises 33 residues: Cytochrome b6-f complex subunit 8 (33 aa).

The helical transmembrane segment at 2–22 (LFTFAWASLAAIFTFSIAMVV) threads the bilayer.

Belongs to the PetN family. As to quaternary structure, the 4 large subunits of the cytochrome b6-f complex are cytochrome b6, subunit IV (17 kDa polypeptide, PetD), cytochrome f and the Rieske protein, while the 4 small subunits are PetG, PetL, PetM and PetN. The complex functions as a dimer.

The protein resides in the cellular thylakoid membrane. In terms of biological role, component of the cytochrome b6-f complex, which mediates electron transfer between photosystem II (PSII) and photosystem I (PSI), cyclic electron flow around PSI, and state transitions. The protein is Cytochrome b6-f complex subunit 8 of Prochlorococcus marinus (strain SARG / CCMP1375 / SS120).